The primary structure comprises 214 residues: Osteoclast-stimulating factor 1 (214 aa).

Residue Ser-2 is modified to N-acetylserine. The SH3 domain maps to 12-71 (GQVKVFRALYTFEPRTPDELYFEEGDIIYITDMSDTNWWKGTSKGRTGLIPSNYVAEQAE). ANK repeat units lie at residues 72–101 (SIDN…GVNG), 105–135 (AGST…ELNQ), and 139–168 (LGDT…RTDL). Thr-200 carries the post-translational modification Phosphothreonine. Ser-202 and Ser-213 each carry phosphoserine.

Interacts with SRC and SMN1. Interacts with FASLG.

It localises to the cytoplasm. Induces bone resorption, acting probably through a signaling cascade which results in the secretion of factor(s) enhancing osteoclast formation and activity. This Sus scrofa (Pig) protein is Osteoclast-stimulating factor 1 (OSTF1).